The sequence spans 741 residues: uncharacterized protein (741 aa).

A signal peptide spans 1-22; it reads MKSVKIIIILALALLIQISHIA.

This is an uncharacterized protein from Archaeoglobus fulgidus (strain ATCC 49558 / DSM 4304 / JCM 9628 / NBRC 100126 / VC-16).